The following is a 175-amino-acid chain: MSERIIMDDAAIQRTVTRIAHEILEYNKGTDNLILLGIKTRGEYLANRIQDKIHQIEQQRIPTGTIDITYFRDDIEHMSSLTTKDAIDIDTDITDKVVIIIDDVLYTGRTVRASLDAILLNARPIKIGLAALVDRGHRELPIRADFVGKNIPTSKEETVSVYLEEMDQRNAVIIK.

Substrate is bound by residues 40-41 (TR), 102-110 (DDVLYTGRT), Arg-135, and Val-159. The short motif at 98 to 110 (VIIIDDVLYTGRT) is the PRPP-binding element.

This sequence belongs to the purine/pyrimidine phosphoribosyltransferase family. PyrR subfamily. In terms of assembly, homodimer and homohexamer; in equilibrium.

The enzyme catalyses UMP + diphosphate = 5-phospho-alpha-D-ribose 1-diphosphate + uracil. In terms of biological role, regulates transcriptional attenuation of the pyrimidine nucleotide (pyr) operon by binding in a uridine-dependent manner to specific sites on pyr mRNA. This disrupts an antiterminator hairpin in the RNA and favors formation of a downstream transcription terminator, leading to a reduced expression of downstream genes. Its function is as follows. Also displays a weak uracil phosphoribosyltransferase activity which is not physiologically significant. The protein is Bifunctional protein PyrR of Staphylococcus aureus (strain MSSA476).